The sequence spans 271 residues: uncharacterized protein (271 aa).

This is an uncharacterized protein from Escherichia coli (strain K12).